Reading from the N-terminus, the 52-residue chain is Large ribosomal subunit protein bL32c (52 aa).

Belongs to the bacterial ribosomal protein bL32 family.

The protein resides in the plastid. It localises to the chloroplast. The sequence is that of Large ribosomal subunit protein bL32c from Eucalyptus globulus subsp. globulus (Tasmanian blue gum).